The chain runs to 32 residues: Acyclotide phyb-M (32 aa).

Glutamine 1 is modified (pyrrolidone carboxylic acid). Disulfide bonds link cysteine 5/cysteine 21, cysteine 9/cysteine 23, and cysteine 14/cysteine 28.

In terms of processing, contains 3 disulfide bonds. Expressed in midvein, lamina and periphery of leaves (at protein level).

Probably participates in a plant defense mechanism. This chain is Acyclotide phyb-M, found in Petunia hybrida (Petunia).